A 492-amino-acid chain; its full sequence is MEHKEIVIGVDLGSRKICAIVAEFKEGILRIIGTAHQDSKEINSKAIKRGRINSLAHASNAIKEVINSAKKMAGLNADEDRNNPMPHFGEYHPKTKAIVSFSGAYTESIRDVTGVASTKDNVVTIDEINRAINSACAKAGLDNDKHILHALPYRFTLDKQEVNDPLGMSGTRLEVFIHIVYTEKNNIENLEKIMIQSGVEIENIVINSYAASIATLSNDERELGVACVDMGGETCNLTIYSGNSIRYNKYLPVGSHHLTTDLSHMLNTPFPYAEEVKIKYGDLSFEGGEETPSQNVQIPTTGSDGHESHIVPLSEIQTIMRERALETFKIIHRSIQDSGLEEHLGGGVVLTGGMALMKGIKELARTHFTNYPVRLAAPVEKYNIMGMFEDLKDPRFSVVVGLILYKAGGHTNYERDSKGVIRYHESDDYTRTAHQSSPTPHIHSSPTERNLSDLKAPSAPLNTAKNDDFLPIKPTEQKGFFKSFLDKISKFF.

Disordered regions lie at residues 288–307 (GEET…DGHE) and 429–458 (YTRT…KAPS). Residues 291-303 (TPSQNVQIPTTGS) show a composition bias toward polar residues. Over residues 436–447 (SSPTPHIHSSPT) the composition is skewed to low complexity.

This sequence belongs to the FtsA/MreB family. In terms of assembly, self-interacts. Interacts with FtsZ.

It localises to the cell inner membrane. In terms of biological role, cell division protein that is involved in the assembly of the Z ring. May serve as a membrane anchor for the Z ring. This chain is Cell division protein FtsA, found in Helicobacter pylori (strain ATCC 700392 / 26695) (Campylobacter pylori).